We begin with the raw amino-acid sequence, 967 residues long: Isoleucine--tRNA ligase (967 aa).

The short motif at 64–74 is the 'HIGH' region element; sequence PYANGNIHIGH. E600 is a binding site for L-isoleucyl-5'-AMP. The 'KMSKS' region signature appears at 641 to 645; the sequence is KQSKS. K644 is a binding site for ATP.

It belongs to the class-I aminoacyl-tRNA synthetase family. IleS type 1 subfamily. In terms of assembly, monomer.

The protein resides in the cytoplasm. It catalyses the reaction tRNA(Ile) + L-isoleucine + ATP = L-isoleucyl-tRNA(Ile) + AMP + diphosphate. Its function is as follows. Catalyzes the attachment of isoleucine to tRNA(Ile). As IleRS can inadvertently accommodate and process structurally similar amino acids such as valine, to avoid such errors it has two additional distinct tRNA(Ile)-dependent editing activities. One activity is designated as 'pretransfer' editing and involves the hydrolysis of activated Val-AMP. The other activity is designated 'posttransfer' editing and involves deacylation of mischarged Val-tRNA(Ile). This chain is Isoleucine--tRNA ligase, found in Agrobacterium fabrum (strain C58 / ATCC 33970) (Agrobacterium tumefaciens (strain C58)).